A 65-amino-acid polypeptide reads, in one-letter code: DNA-directed RNA polymerase subunit Rpo10 (65 aa).

Residues C7, C10, C44, and C45 each contribute to the Zn(2+) site.

It belongs to the archaeal Rpo10/eukaryotic RPB10 RNA polymerase subunit family. Part of the RNA polymerase complex. It depends on Zn(2+) as a cofactor.

It is found in the cytoplasm. The protein resides in the chromosome. The catalysed reaction is RNA(n) + a ribonucleoside 5'-triphosphate = RNA(n+1) + diphosphate. Its function is as follows. DNA-dependent RNA polymerase (RNAP) catalyzes the transcription of DNA into RNA using the four ribonucleoside triphosphates as substrates. In Thermococcus kodakarensis (strain ATCC BAA-918 / JCM 12380 / KOD1) (Pyrococcus kodakaraensis (strain KOD1)), this protein is DNA-directed RNA polymerase subunit Rpo10.